We begin with the raw amino-acid sequence, 276 residues long: Putative E3 ubiquitin-protein ligase SINA-like 9 (276 aa).

The segment at 38–74 (CPICCEALTSPIFQCDNGHLACGSCCPKLSNKCPACT) adopts an RING-type zinc-finger fold. Positions 88 to 274 (VLESILIPCP…MQVFIIENVD (187 aa)) are SBD. An SIAH-type zinc finger spans residues 91–149 (SILIPCPNVRFGCTKSFFYGKESAHEKECIFSQCSCPSSVCDYTGSYKDLYAHYKLTHS). Positions 96, 103, 115, 119, 126, 131, 143, and 148 each coordinate Zn(2+).

It belongs to the SINA (Seven in absentia) family.

It carries out the reaction S-ubiquitinyl-[E2 ubiquitin-conjugating enzyme]-L-cysteine + [acceptor protein]-L-lysine = [E2 ubiquitin-conjugating enzyme]-L-cysteine + N(6)-ubiquitinyl-[acceptor protein]-L-lysine.. It participates in protein modification; protein ubiquitination. Its function is as follows. E3 ubiquitin-protein ligase that mediates ubiquitination and subsequent proteasomal degradation of target proteins. E3 ubiquitin ligases accept ubiquitin from an E2 ubiquitin-conjugating enzyme in the form of a thioester and then directly transfers the ubiquitin to targeted substrates. It probably triggers the ubiquitin-mediated degradation of different substrates. This chain is Putative E3 ubiquitin-protein ligase SINA-like 9, found in Arabidopsis thaliana (Mouse-ear cress).